We begin with the raw amino-acid sequence, 207 residues long: Ribonuclease HII (207 aa).

One can recognise an RNase H type-2 domain in the interval 1 to 207; that stretch reads MDVLGIDEAG…ATVEKMKNSQ (207 aa). A divalent metal cation contacts are provided by aspartate 7, glutamate 8, and aspartate 105.

Belongs to the RNase HII family. Requires Mn(2+) as cofactor. Mg(2+) is required as a cofactor.

Its subcellular location is the cytoplasm. It carries out the reaction Endonucleolytic cleavage to 5'-phosphomonoester.. Endonuclease that specifically degrades the RNA of RNA-DNA hybrids. The polypeptide is Ribonuclease HII (Methanobrevibacter smithii (strain ATCC 35061 / DSM 861 / OCM 144 / PS)).